We begin with the raw amino-acid sequence, 60 residues long: UPF0337 protein asr4653 (60 aa).

The protein belongs to the UPF0337 (CsbD) family.

In Nostoc sp. (strain PCC 7120 / SAG 25.82 / UTEX 2576), this protein is UPF0337 protein asr4653.